The chain runs to 1465 residues: DNA polymerase III PolC-type (1465 aa).

The region spanning 427–583 (YVVFDVETTG…YDAEATGRLL (157 aa)) is the Exonuclease domain.

Belongs to the DNA polymerase type-C family. PolC subfamily.

The protein resides in the cytoplasm. The catalysed reaction is DNA(n) + a 2'-deoxyribonucleoside 5'-triphosphate = DNA(n+1) + diphosphate. Required for replicative DNA synthesis. This DNA polymerase also exhibits 3' to 5' exonuclease activity. The polypeptide is DNA polymerase III PolC-type (Streptococcus pyogenes serotype M18 (strain MGAS8232)).